The primary structure comprises 101 residues: Small ribosomal subunit protein uS14 (101 aa).

The protein belongs to the universal ribosomal protein uS14 family. In terms of assembly, part of the 30S ribosomal subunit. Contacts proteins S3 and S10.

Functionally, binds 16S rRNA, required for the assembly of 30S particles and may also be responsible for determining the conformation of the 16S rRNA at the A site. The chain is Small ribosomal subunit protein uS14 from Ehrlichia chaffeensis (strain ATCC CRL-10679 / Arkansas).